Reading from the N-terminus, the 262-residue chain is 5'-nucleotidase SurE (262 aa).

Residues Asp8, Asp9, Ser41, and Asn97 each coordinate a divalent metal cation.

This sequence belongs to the SurE nucleotidase family. A divalent metal cation serves as cofactor.

It is found in the cytoplasm. The catalysed reaction is a ribonucleoside 5'-phosphate + H2O = a ribonucleoside + phosphate. Nucleotidase that shows phosphatase activity on nucleoside 5'-monophosphates. This Methanococcus maripaludis (strain DSM 14266 / JCM 13030 / NBRC 101832 / S2 / LL) protein is 5'-nucleotidase SurE.